The primary structure comprises 2863 residues: Lipopolysaccharide-responsive and beige-like anchor protein (2863 aa).

3 disordered regions span residues Met1–Leu35, Val969–Ser1005, and Glu1018–Thr1039. Ala2 is subject to N-acetylalanine. 3 positions are modified to phosphoserine: Ser10, Ser979, and Ser1003. A compositionally biased stretch (polar residues) spans Phe985–Ser1005. A coiled-coil region spans residues Asn1006–Asp1053. Residues Glu1024–Leu1034 are compositionally biased toward acidic residues. Phosphoserine occurs at positions 1100, 1135, and 1139. Positions Pro1161 to Asp1176 are enriched in basic and acidic residues. The segment at Pro1161–Glu1193 is disordered. Positions Ser1177–Glu1193 are enriched in polar residues. 3 positions are modified to phosphoserine: Ser1233, Ser1247, and Ser1261. One copy of the WD 1 repeat lies at Ser1301 to Asp1343. Ser1488 and Ser1498 each carry phosphoserine. A helical transmembrane segment spans residues Phe1531 to Tyr1548. Low complexity predominate over residues Leu1586–Ser1599. Disordered regions lie at residues Leu1586 to Pro1668 and Gln1759 to Asp1789. Ser1605 carries the post-translational modification Phosphoserine. Residues Lys1650–Thr1664 are compositionally biased toward basic and acidic residues. 3 positions are modified to phosphoserine: Ser1767, Ser1770, and Ser2064. The span at Gly1769–Asp1789 shows a compositional bias: polar residues. Residues Asn2073–Pro2181 enclose the BEACH-type PH domain. The BEACH domain occupies Ala2200–Arg2489. At Ser2496 the chain carries Phosphoserine. 5 WD repeats span residues Asp2591 to Val2633, Gly2636 to Gly2679, Gly2695 to Glu2735, Glu2777 to Ala2816, and Gly2819 to Glu2858.

As to quaternary structure, interacts with TOM1 and TOLLIP. In terms of tissue distribution, ubiquitous.

The protein resides in the cell membrane. The protein localises to the endoplasmic reticulum membrane. It is found in the golgi apparatus. It localises to the trans-Golgi network membrane. Its subcellular location is the lysosome membrane. Its function is as follows. Involved in coupling signal transduction and vesicle trafficking to enable polarized secretion and/or membrane deposition of immune effector molecules. Involved in phagophore growth during mitophagy by regulating ATG9A trafficking to mitochondria. The sequence is that of Lipopolysaccharide-responsive and beige-like anchor protein from Homo sapiens (Human).